A 216-amino-acid chain; its full sequence is 3-isopropylmalate dehydratase small subunit (216 aa).

It belongs to the LeuD family. LeuD type 1 subfamily. Heterodimer of LeuC and LeuD.

It catalyses the reaction (2R,3S)-3-isopropylmalate = (2S)-2-isopropylmalate. Its pathway is amino-acid biosynthesis; L-leucine biosynthesis; L-leucine from 3-methyl-2-oxobutanoate: step 2/4. Its function is as follows. Catalyzes the isomerization between 2-isopropylmalate and 3-isopropylmalate, via the formation of 2-isopropylmaleate. The sequence is that of 3-isopropylmalate dehydratase small subunit from Bordetella avium (strain 197N).